The following is a 335-amino-acid chain: MANSNNQLLKEIRFDWNKEEILEILNMPLIDLMWESQTIHRKFNKYDIQLASLFSVKTGGCEENCSYCSQSIYSASEIKSHPQFQVEEVLARAQIAKKEGADRFCMGWAWREIRDGKSFNAMLEMVSGVRDLGMEACVTAGMLTEEQAARLADAGLTAYNHNLDTSPEHYKNIITTRTYQDRLDTIKRVRNAGINVCCGGIIGLGETNGDRASLLKVLSNMNPHPESVPINSLVAIEGTGLEDNQEIDSIEMIRMIATARILMPKSKIRLSAGREKLSKEAQILCFQCGANSIFYGDELLTTSNPSFQSDRKLLKEVGVSFNKDFETREKTLSSL.

The region spanning 46–274 (YDIQLASLFS…KSKIRLSAGR (229 aa)) is the Radical SAM core domain. [4Fe-4S] cluster is bound by residues Cys61, Cys65, and Cys68. Residues Cys105, Cys137, Cys197, and Arg269 each contribute to the [2Fe-2S] cluster site.

It belongs to the radical SAM superfamily. Biotin synthase family. Homodimer. [4Fe-4S] cluster is required as a cofactor. The cofactor is [2Fe-2S] cluster.

It catalyses the reaction (4R,5S)-dethiobiotin + (sulfur carrier)-SH + 2 reduced [2Fe-2S]-[ferredoxin] + 2 S-adenosyl-L-methionine = (sulfur carrier)-H + biotin + 2 5'-deoxyadenosine + 2 L-methionine + 2 oxidized [2Fe-2S]-[ferredoxin]. It functions in the pathway cofactor biosynthesis; biotin biosynthesis; biotin from 7,8-diaminononanoate: step 2/2. Functionally, catalyzes the conversion of dethiobiotin (DTB) to biotin by the insertion of a sulfur atom into dethiobiotin via a radical-based mechanism. The chain is Biotin synthase from Prochlorococcus marinus (strain MIT 9215).